The chain runs to 399 residues: Acetate kinase 2 (399 aa).

Mg(2+) is bound at residue Asn10. Position 17 (Lys17) interacts with ATP. Residue Arg89 coordinates substrate. The active-site Proton donor/acceptor is the Asp146. ATP-binding positions include His206–Gly210, Asp281–Arg283, and Gly329–Asn333. Glu384 is a binding site for Mg(2+).

The protein belongs to the acetokinase family. As to quaternary structure, homodimer. Mg(2+) is required as a cofactor. Requires Mn(2+) as cofactor.

Its subcellular location is the cytoplasm. It carries out the reaction acetate + ATP = acetyl phosphate + ADP. It participates in metabolic intermediate biosynthesis; acetyl-CoA biosynthesis; acetyl-CoA from acetate: step 1/2. Functionally, catalyzes the formation of acetyl phosphate from acetate and ATP. Can also catalyze the reverse reaction. The polypeptide is Acetate kinase 2 (Neisseria meningitidis serogroup A / serotype 4A (strain DSM 15465 / Z2491)).